A 548-amino-acid polypeptide reads, in one-letter code: Frizzled-7 (548 aa).

A signal peptide spans 1-19 (MFATVSLLFCLLLQPSPSA). Over 20–230 (QQYHGEKGIS…EEEVRFARLW (211 aa)) the chain is Extracellular. One can recognise an FZ domain in the interval 31-150 (PDHGFCQPIS…HGAGEICVGQ (120 aa)). 5 disulfides stabilise this stretch: C36/C97, C44/C90, C81/C118, C107/C147, and C111/C135. A glycan (N-linked (GlcNAc...) asparagine) is linked at N50. N151 carries an N-linked (GlcNAc...) asparagine glycan. Residues 231-251 (VGIWAILCGISTLFTVLTYLV) form a helical membrane-spanning segment. At 252–262 (DMRRFSYPERP) the chain is on the cytoplasmic side. A helical transmembrane segment spans residues 263 to 283 (IIFLSGCYFMVAVAYTAGFLL). Topologically, residues 284–310 (EERGVCVERFSEDSYRTVAQGTKKEGC) are extracellular. The helical transmembrane segment at 311-331 (TILFMILYFFGMASSIWWVIL) threads the bilayer. The Cytoplasmic segment spans residues 332–353 (SLTWFLAAGMKWGHEAIEANSQ). A helical transmembrane segment spans residues 354–374 (YFHLAAWAVPAVKTITILAMG). Residues 375–397 (QVDGDILSGVCYVGINSVDSLRG) are Extracellular-facing. Residues 398–418 (FVLAPLFVYLFIGTSFLLAGF) traverse the membrane as a helical segment. Residues 419–444 (VSLFRIRTIMKHDGTKTEKLEKLMVR) lie on the Cytoplasmic side of the membrane. The helical transmembrane segment at 445–465 (IGVFSVMYTVPATIVLACYFY) threads the bilayer. Over 466–502 (EQAFRDTWEKTWLVQTCKGFAVPCPNYNFAPMSPDFT) the chain is Extracellular. The chain crosses the membrane as a helical span at residues 503 to 523 (VFMIKYLMTMIVGITSSFWIW). At 524-548 (SGKTLQSWRRFYHRLSNGGKGETAV) the chain is on the cytoplasmic side. The short motif at 526 to 531 (KTLQSW) is the Lys-Thr-X-X-X-Trp motif, mediates interaction with the PDZ domain of Dvl family members element. The short motif at 546 to 548 (TAV) is the PDZ-binding element.

Belongs to the G-protein coupled receptor Fz/Smo family. Interacts with wnt11 and sdc4. The extracellular domain interacts with the extracellular domain of pcdh8/papc.

It localises to the cell membrane. It is found in the endosome membrane. Its function is as follows. Receptor for Wnt proteins. Acts in both canonical and non-canonical Wnt pathways. Although different papers report differing Wnt preferences, wnt5a, wnt8b and wnt11 have been proposed as synergists. In the canonical Wnt pathway, acts via beta-catenin to promote the expression of the dorsal genes siamois, twin and nodal3 and to establish the dorsal axis of the embryo and induce dorsal mesoderm formation. In a non-canonical Wnt/planar cell polarity (PCP) pathway, acts with sdc4 and dvl2/dsh to regulate convergent extension movements in gastrulation. Triggers phosphorylation of dvl2/dsh and its translocation to the plasma membrane. In a third branch of Wnt signaling, acts in a non-canonical pathway via trimeric G proteins, and independently of dvl2/dsh, to recruit protein kinase C (PKC) to the membrane and thus activate PKC. PKC signaling controls cell sorting and tissue separation during gastrulation. The polypeptide is Frizzled-7 (Xenopus tropicalis (Western clawed frog)).